We begin with the raw amino-acid sequence, 457 residues long: Probable serine/threonine-protein phosphatase ECU05_0440 (457 aa).

Residues Asp-198, His-200, Asp-225, and Asn-257 each coordinate Mn(2+). His-258 functions as the Proton donor in the catalytic mechanism. Residues His-309 and His-383 each contribute to the Mn(2+) site.

This sequence belongs to the PPP phosphatase family. PP-1 subfamily. It depends on Mn(2+) as a cofactor.

The catalysed reaction is O-phospho-L-seryl-[protein] + H2O = L-seryl-[protein] + phosphate. It catalyses the reaction O-phospho-L-threonyl-[protein] + H2O = L-threonyl-[protein] + phosphate. The protein is Probable serine/threonine-protein phosphatase ECU05_0440 of Encephalitozoon cuniculi (strain GB-M1) (Microsporidian parasite).